A 412-amino-acid chain; its full sequence is MTDTVELAKGDIISVEVLRPAHGGEGIGHHDGRVIFVKGGIPGDVVDVEIAQLKKKWARGEVVKVTTASADRVDSRCPAAAAGAGCCDYAELNPTVELEIKSRVLRDQLERIGGIDELPEFELQDLEPTAGWRTRVRLGVDASGRAGFRKLKSNELVTEVACSQVVPELLEGLVGEGARRFTPGVEIIAAIDDAGQRHVVESRKAPRGRRTETVLKVLEGTGEVEQKVGDYTWKFPVSSFWQAHTKAPAAYSEFIAEALTGLELVDVDKRGPVAWDLYGGVGLFAPIITSKLQAAVHSVELSPGSAEAGEEALAGLPVTFHTGRVEGMASQLPSPNVVVLDPPRTGAGSDVLKSIAEAKPQLVIHIGCDPATFARDVADWKLNGYEMDQLAVFNAFPGTHHFETIGVFVRVS.

A TRAM domain is found at 6 to 64; sequence ELAKGDIISVEVLRPAHGGEGIGHHDGRVIFVKGGIPGDVVDVEIAQLKKKWARGEVVK. The S-adenosyl-L-methionine site is built by Gln242, Tyr278, Glu300, and Asp341. The Nucleophile role is filled by Cys368.

Belongs to the class I-like SAM-binding methyltransferase superfamily. RNA M5U methyltransferase family.

This is an uncharacterized protein from Corynebacterium glutamicum (strain ATCC 13032 / DSM 20300 / JCM 1318 / BCRC 11384 / CCUG 27702 / LMG 3730 / NBRC 12168 / NCIMB 10025 / NRRL B-2784 / 534).